A 684-amino-acid polypeptide reads, in one-letter code: Extracellular lipase (684 aa).

The first 48 residues, 1–48 (MKKKLIYAAVVSALLAGCGGSDDNKGDTSSYLDYLLTGSNAVGPSALA), serve as a signal peptide directing secretion. 2 disordered regions span residues 321–405 (SIPV…ADWG) and 462–493 (QRER…GDRS). Over residues 385-405 (ADCRSDPPERAAGRGEQADWG) the composition is skewed to basic and acidic residues. Residue Ser-568 is the Nucleophile of the active site.

Belongs to the AB hydrolase superfamily. Lipase family. In terms of assembly, monomer.

It localises to the secreted. It carries out the reaction a triacylglycerol + H2O = a diacylglycerol + a fatty acid + H(+). Its function is as follows. The optimum chain lengths for the acyl moiety is C6 for ester hydrolysis and C6 and C8 for triacylglycerol hydrolysis. The chain is Extracellular lipase from Aeromonas hydrophila.